A 547-amino-acid chain; its full sequence is Chaperonin GroEL 1 (547 aa).

Residues 30–33 (TLGP), Lys51, 87–91 (DGTTT), Gly415, and Asp496 contribute to the ATP site.

Belongs to the chaperonin (HSP60) family. As to quaternary structure, forms a cylinder of 14 subunits composed of two heptameric rings stacked back-to-back. Interacts with the co-chaperonin GroES.

The protein resides in the cytoplasm. The enzyme catalyses ATP + H2O + a folded polypeptide = ADP + phosphate + an unfolded polypeptide.. Together with its co-chaperonin GroES, plays an essential role in assisting protein folding. The GroEL-GroES system forms a nano-cage that allows encapsulation of the non-native substrate proteins and provides a physical environment optimized to promote and accelerate protein folding. In Bradyrhizobium sp. (strain BTAi1 / ATCC BAA-1182), this protein is Chaperonin GroEL 1.